Consider the following 384-residue polypeptide: Histidinol-phosphate aminotransferase 1 (384 aa).

K233 is subject to N6-(pyridoxal phosphate)lysine.

This sequence belongs to the class-II pyridoxal-phosphate-dependent aminotransferase family. Histidinol-phosphate aminotransferase subfamily. In terms of assembly, homodimer. Pyridoxal 5'-phosphate is required as a cofactor.

The enzyme catalyses L-histidinol phosphate + 2-oxoglutarate = 3-(imidazol-4-yl)-2-oxopropyl phosphate + L-glutamate. It participates in amino-acid biosynthesis; L-histidine biosynthesis; L-histidine from 5-phospho-alpha-D-ribose 1-diphosphate: step 7/9. This is Histidinol-phosphate aminotransferase 1 from Thiobacillus denitrificans (strain ATCC 25259 / T1).